The following is a 469-amino-acid chain: Citrate synthase, mitochondrial (469 aa).

Residues 1–30 (MSFLTVSRLAPKLLNSKNATYFLVAARNAS) constitute a mitochondrion transit peptide. Active-site residues include H304 and H350. R359 is a binding site for oxaloacetate. Residue D405 is part of the active site. Oxaloacetate contacts are provided by R431 and R451.

Belongs to the citrate synthase family. Homodimer.

It localises to the mitochondrion matrix. It catalyses the reaction oxaloacetate + acetyl-CoA + H2O = citrate + CoA + H(+). Its pathway is carbohydrate metabolism; tricarboxylic acid cycle; isocitrate from oxaloacetate: step 1/2. Functionally, key enzyme of the Krebs tricarboxylic acid cycle which catalyzes the synthesis of citrate from acetyl coenzyme A and oxaloacetate. The sequence is that of Citrate synthase, mitochondrial (cs) from Xiphias gladius (Swordfish).